The following is a 338-amino-acid chain: Uroporphyrinogen decarboxylase (338 aa).

Residues R21–R25, D71, Y146, S201, and H316 contribute to the substrate site.

Belongs to the uroporphyrinogen decarboxylase family. As to quaternary structure, homodimer.

Its subcellular location is the cytoplasm. The catalysed reaction is uroporphyrinogen III + 4 H(+) = coproporphyrinogen III + 4 CO2. It functions in the pathway porphyrin-containing compound metabolism; protoporphyrin-IX biosynthesis; coproporphyrinogen-III from 5-aminolevulinate: step 4/4. Catalyzes the decarboxylation of four acetate groups of uroporphyrinogen-III to yield coproporphyrinogen-III. The protein is Uroporphyrinogen decarboxylase of Rickettsia akari (strain Hartford).